A 111-amino-acid polypeptide reads, in one-letter code: Transcription initiation factor IIA subunit 2 (111 aa).

The protein belongs to the TFIIA subunit 2 family. As to quaternary structure, TFIIA is a heterodimer of the large unprocessed subunit 1 and a small subunit gamma. It was originally believed to be a heterotrimer of an alpha, a beta and a gamma subunit. Interacts with NCOA6 general coactivator. TFIIA forms a complex with TBP.

Its subcellular location is the nucleus. Functionally, TFIIA is a component of the transcription machinery of RNA polymerase II and plays an important role in transcriptional activation. TFIIA in a complex with TBP mediates transcriptional activity. This chain is Transcription initiation factor IIA subunit 2 (gtf2a2), found in Paralichthys olivaceus (Bastard halibut).